Reading from the N-terminus, the 342-residue chain is MNSLVALVLLGQMIGSTLSHHLQSHVDCNGEDAEKWADMAVHYINEHNLHGYKQVFNVINEIHVLPRRPRGKIIILELKLLETECHVLDPTPVENCTVRPPHYHAVEGDCDVKILHDEGVDKVIGAKCHSDPDSVEDVRRNCPKCPILLPLSDPHVVDSVEYVLNKHNEKLSGHVYEVLEISRGQHKYEPEAFYVEFAIVEVNCTAQEAHDDHHHCHPNTAGENHIGFCRATVFRSHASLEKPKDEQFESDCVIFDVKEGHAHSHLIEHHIGNYNTSPGHNNTVLNLAHSHNHTSASHESHSHEHVAEVPVAVAKREVPTNTPHDHTHPVKLCPGKVHHFKL.

Positions Met-1–Ser-19 are cleaved as a signal peptide. 2 Cystatin fetuin-A-type domains span residues His-20–His-129 and Arg-140–Val-253. 6 disulfide bridges follow: Cys-28–Cys-333, Cys-85–Cys-96, Cys-110–Cys-128, Cys-142–Cys-145, Cys-204–Cys-216, and Cys-229–Cys-252. The N-linked (GlcNAc...) asparagine glycan is linked to Asn-95. N-linked (GlcNAc...) asparagine glycosylation is present at Asn-203. N-linked (GlcNAc...) asparagine glycans are attached at residues Asn-281 and Asn-292.

It belongs to the fetuin family. As to quaternary structure, homodimer. In terms of tissue distribution, expressed by the liver.

The protein resides in the secreted. Potent inhibitor of hemorrhagic activity but also proteolytic activities. Inhibition occurs by formation of a non-covalent complex between this protein and the proteinases at their metalloproteinase domains. This Gloydius brevicauda (Korean slamosa snake) protein is Antihemorrhagic factor cHLP-B.